A 349-amino-acid chain; its full sequence is MVRAKRKLDHIEYALSTGQSRTHGFHDIDFVHQSLPNSNYDTITCETKIGELSLSSPIFINAMTGGGGEKTLHINEQLAYVAKHHNLAMAVGSQMAALKDESEAASYKVIRKVNPNGIFFANLGSEATIEQAERAVDMIEANALQIHLNVIQELTMPEGDRDFTGVLQRIEKIVLNSKVPIIVKEVGFGMSKETMQQLVNVGVTAIDIGGQGGTNFAAVENERRQRMLSYFNNWGIQTATSIIEATSTNNNLSFIASGGIQTALDVAKAIALGANTTAFAGYFLRILMQDGIEKLLDEIELLHTDLKFIMTALGAKTIEELQSVPLVVKGETYHWLMQRGIDTAHYSRR.

Position 6–7 (6–7 (RK)) interacts with substrate. Residues 62 to 64 (AMT), Ser-93, and Asn-122 each bind FMN. Gln-152 lines the substrate pocket. Glu-153 serves as a coordination point for Mg(2+). Residues Lys-184, Thr-214, 258-259 (GG), and 280-281 (AG) each bind FMN.

Belongs to the IPP isomerase type 2 family. Homooctamer. Dimer of tetramers. The cofactor is FMN. It depends on NADPH as a cofactor. Requires Mg(2+) as cofactor.

It localises to the cytoplasm. It catalyses the reaction isopentenyl diphosphate = dimethylallyl diphosphate. Involved in the biosynthesis of isoprenoids. Catalyzes the 1,3-allylic rearrangement of the homoallylic substrate isopentenyl (IPP) to its allylic isomer, dimethylallyl diphosphate (DMAPP). This Bacillus cereus (strain B4264) protein is Isopentenyl-diphosphate delta-isomerase.